The following is a 364-amino-acid chain: UDP-N-acetylglucosamine--N-acetylmuramyl-(pentapeptide) pyrophosphoryl-undecaprenol N-acetylglucosamine transferase (364 aa).

UDP-N-acetyl-alpha-D-glucosamine is bound by residues 10 to 12 (TGG), Asn-124, Arg-165, Ser-193, Ile-248, and Gln-293.

The protein belongs to the glycosyltransferase 28 family. MurG subfamily.

It localises to the cell inner membrane. It catalyses the reaction di-trans,octa-cis-undecaprenyl diphospho-N-acetyl-alpha-D-muramoyl-L-alanyl-D-glutamyl-meso-2,6-diaminopimeloyl-D-alanyl-D-alanine + UDP-N-acetyl-alpha-D-glucosamine = di-trans,octa-cis-undecaprenyl diphospho-[N-acetyl-alpha-D-glucosaminyl-(1-&gt;4)]-N-acetyl-alpha-D-muramoyl-L-alanyl-D-glutamyl-meso-2,6-diaminopimeloyl-D-alanyl-D-alanine + UDP + H(+). The protein operates within cell wall biogenesis; peptidoglycan biosynthesis. In terms of biological role, cell wall formation. Catalyzes the transfer of a GlcNAc subunit on undecaprenyl-pyrophosphoryl-MurNAc-pentapeptide (lipid intermediate I) to form undecaprenyl-pyrophosphoryl-MurNAc-(pentapeptide)GlcNAc (lipid intermediate II). In Geobacter metallireducens (strain ATCC 53774 / DSM 7210 / GS-15), this protein is UDP-N-acetylglucosamine--N-acetylmuramyl-(pentapeptide) pyrophosphoryl-undecaprenol N-acetylglucosamine transferase.